A 388-amino-acid polypeptide reads, in one-letter code: Xylose isomerase (388 aa).

Catalysis depends on residues His-54 and Asp-57. Glu-181, Glu-217, His-220, Asp-245, Asp-255, Asp-257, and Asp-287 together coordinate Mg(2+).

This sequence belongs to the xylose isomerase family. Homotetramer. Requires Mg(2+) as cofactor.

Its subcellular location is the cytoplasm. The catalysed reaction is alpha-D-xylose = alpha-D-xylulofuranose. Functionally, involved in D-xylose catabolism. This is Xylose isomerase (xylA) from Streptomyces murinus.